Reading from the N-terminus, the 965-residue chain is Iron-responsive element-binding protein 2 (965 aa).

Positions 142–170 are disordered; that stretch reads NAPNPGGGEAQKPTAKLSPLKGQPRKLPC. Residues Cys-514, Cys-580, and Cys-583 each contribute to the [4Fe-4S] cluster site.

This sequence belongs to the aconitase/IPM isomerase family. The cofactor is [4Fe-4S] cluster. Post-translationally, ubiquitinated and degraded by the proteasome in presence of high level of iron and oxygen.

The protein resides in the cytoplasm. RNA-binding protein that binds to iron-responsive elements (IRES), which are stem-loop structures found in the 5'-UTR of ferritin, and delta aminolevulinic acid synthase mRNAs, and in the 3'-UTR of transferrin receptor mRNA. Binding to the IRE element in ferritin results in the repression of its mRNA translation. Binding of the protein to the transferrin receptor mRNA inhibits the degradation of this otherwise rapidly degraded mRNA. The sequence is that of Iron-responsive element-binding protein 2 (IREB2) from Gallus gallus (Chicken).